Reading from the N-terminus, the 440-residue chain is Glutamate--tRNA ligase 1 (440 aa).

A 'HIGH' region motif is present at residues 7 to 17 (PSPTGYLHVGN). A 'KMSKS' region motif is present at residues 238–242 (KISKR). Lysine 241 provides a ligand contact to ATP.

It belongs to the class-I aminoacyl-tRNA synthetase family. Glutamate--tRNA ligase type 1 subfamily. Monomer.

It is found in the cytoplasm. The enzyme catalyses tRNA(Glu) + L-glutamate + ATP = L-glutamyl-tRNA(Glu) + AMP + diphosphate. Its function is as follows. Catalyzes the attachment of glutamate to tRNA(Glu) in a two-step reaction: glutamate is first activated by ATP to form Glu-AMP and then transferred to the acceptor end of tRNA(Glu). The sequence is that of Glutamate--tRNA ligase 1 from Wolbachia sp. subsp. Brugia malayi (strain TRS).